The primary structure comprises 633 residues: DNA polymerase DpoZ (633 aa).

The protein belongs to the DNA polymerase type-A family. DpoZ subfamily.

The enzyme catalyses DNA(n) + a 2'-deoxyribonucleoside 5'-triphosphate = DNA(n+1) + diphosphate. The catalysed reaction is dZTP + DNA(n) = DNA(n)-Z + diphosphate. Functionally, DNA polymerase that preferentially incorporates the non-canonical base aminoadenine/dZTP instead of adenine into the synthesized DNA. More efficient in using dZTP instead of dATP as a substrate. In addition to this preference for dZTP, the phage also encodes a dATP triphosphohydrolase that removes dATP and its precursor dADP from the nucleotide pool of the host. This chain is DNA polymerase DpoZ (dpoZ), found in Vibrio phage phiVC8.